A 130-amino-acid chain; its full sequence is Histone H2A type 1 (130 aa).

Residues 1–22 (MSGRGKQGGKARAKAKTRSSRA) are disordered. An N-acetylserine modification is found at S2. Phosphoserine; by RPS6KA5 is present on S2. Residue R4 is modified to Citrulline; alternate. At R4 the chain carries Symmetric dimethylarginine; by PRMT5; alternate. An N6-(2-hydroxyisobutyryl)lysine modification is found at K6. Basic residues predominate over residues 7–19 (QGGKARAKAKTRS). K10 is subject to N6-(2-hydroxyisobutyryl)lysine; alternate. K10 carries the N6-lactoyllysine; alternate modification. The residue at position 10 (K10) is an N6-succinyllysine; alternate. Residues K14 and K16 each participate in a glycyl lysine isopeptide (Lys-Gly) (interchain with G-Cter in ubiquitin) cross-link. At K37 the chain carries N6-(2-hydroxyisobutyryl)lysine; alternate. Residue K37 is modified to N6-(beta-hydroxybutyryl)lysine; alternate. N6-crotonyllysine; alternate is present on K37. N6-(2-hydroxyisobutyryl)lysine is present on residues K75 and K76. N6-(2-hydroxyisobutyryl)lysine; alternate is present on K96. K96 carries the post-translational modification N6-succinyllysine; alternate. The residue at position 96 (K96) is an N6-glutaryllysine; alternate. Position 100 is an N6-glutaryllysine (K100). N5-methylglutamine is present on Q105. The residue at position 119 (K119) is an N6-(2-hydroxyisobutyryl)lysine; alternate. 2 positions are modified to N6-crotonyllysine; alternate: K119 and K120. N6-glutaryllysine; alternate occurs at positions 119 and 120. K120 participates in a covalent cross-link: Glycyl lysine isopeptide (Lys-Gly) (interchain with G-Cter in ubiquitin); alternate. T121 bears the Phosphothreonine; by DCAF1 mark. The residue at position 126 (K126) is an N6-crotonyllysine; alternate. K126 is subject to N6-glutaryllysine; alternate.

It belongs to the histone H2A family. In terms of assembly, the nucleosome is a histone octamer containing two molecules each of H2A, H2B, H3 and H4 assembled in one H3-H4 heterotetramer and two H2A-H2B heterodimers. The octamer wraps approximately 147 bp of DNA. Interacts with VRK1; the interaction is mediated by the nucleosome acidic patch, a cluster of negatively charged residues of H2A and H2B forming a cleft within the nucleosome core. Post-translationally, deiminated on Arg-4 in granulocytes upon calcium entry. Monoubiquitination of Lys-120 (H2AK119Ub) by RING1, TRIM37 and RNF2/RING2 complex gives a specific tag for epigenetic transcriptional repression and participates in X chromosome inactivation of female mammals. It is involved in the initiation of both imprinted and random X inactivation. Ubiquitinated H2A is enriched in inactive X chromosome chromatin. Ubiquitination of H2A functions downstream of methylation of 'Lys-27' of histone H3 (H3K27me). H2AK119Ub by RNF2/RING2 can also be induced by ultraviolet and may be involved in DNA repair. Following DNA double-strand breaks (DSBs), it is ubiquitinated through 'Lys-63' linkage of ubiquitin moieties by the E2 ligase UBE2N and the E3 ligases RNF8 and RNF168, leading to the recruitment of repair proteins to sites of DNA damage. Ubiquitination at Lys-14 and Lys-16 (H2AK13Ub and H2AK15Ub, respectively) in response to DNA damage is initiated by RNF168 that mediates monoubiquitination at these 2 sites, and 'Lys-63'-linked ubiquitin are then conjugated to monoubiquitin; RNF8 is able to extend 'Lys-63'-linked ubiquitin chains in vitro. H2AK119Ub and ionizing radiation-induced 'Lys-63'-linked ubiquitination (H2AK13Ub and H2AK15Ub) are distinct events. In terms of processing, phosphorylation on Ser-2 (H2AS1ph) is enhanced during mitosis. Phosphorylation on Ser-2 by RPS6KA5/MSK1 directly represses transcription. Acetylation of H3 inhibits Ser-2 phosphorylation by RPS6KA5/MSK1. Phosphorylation at Thr-121 (H2AT120ph) by DCAF1 is present in the regulatory region of many tumor suppresor genes and down-regulates their transcription. Post-translationally, symmetric dimethylation on Arg-4 by the PRDM1/PRMT5 complex may play a crucial role in the germ-cell lineage. Glutamine methylation at Gln-105 (H2AQ104me) by FBL is specifically dedicated to polymerase I. It is present at 35S ribosomal DNA locus and impairs binding of the FACT complex. In terms of processing, crotonylation (Kcr) is specifically present in male germ cells and marks testis-specific genes in post-meiotic cells, including X-linked genes that escape sex chromosome inactivation in haploid cells. Crotonylation marks active promoters and enhancers and confers resistance to transcriptional repressors. It is also associated with post-meiotically activated genes on autosomes. Post-translationally, lactylated in macrophages by EP300/P300 by using lactoyl-CoA directly derived from endogenous or exogenous lactate, leading to stimulates gene transcription.

The protein resides in the nucleus. Its subcellular location is the chromosome. In terms of biological role, core component of nucleosome. Nucleosomes wrap and compact DNA into chromatin, limiting DNA accessibility to the cellular machineries which require DNA as a template. Histones thereby play a central role in transcription regulation, DNA repair, DNA replication and chromosomal stability. DNA accessibility is regulated via a complex set of post-translational modifications of histones, also called histone code, and nucleosome remodeling. In Bos taurus (Bovine), this protein is Histone H2A type 1.